The chain runs to 389 residues: tRNA (guanine-N(7)-)-methyltransferase non-catalytic subunit TRM82 (389 aa).

WD repeat units lie at residues Gln-44–Lys-86, Gly-134–Leu-179, and Gln-184–Glu-222.

This sequence belongs to the WD repeat TRM82 family. Forms a heterodimer with the catalytic subunit TRM8.

Its subcellular location is the nucleus. It functions in the pathway tRNA modification; N(7)-methylguanine-tRNA biosynthesis. Functionally, required for the formation of N(7)-methylguanine at position 46 (m7G46) in tRNA. In the complex, it is required to stabilize and induce conformational changes of the catalytic subunit. This is tRNA (guanine-N(7)-)-methyltransferase non-catalytic subunit TRM82 from Lodderomyces elongisporus (strain ATCC 11503 / CBS 2605 / JCM 1781 / NBRC 1676 / NRRL YB-4239) (Yeast).